The primary structure comprises 434 residues: Homogentisate 1,2-dioxygenase (434 aa).

Histidine 289 (proton acceptor) is an active-site residue. Residues histidine 332 and glutamate 338 each coordinate Fe cation. Residues tyrosine 347 and histidine 368 each coordinate homogentisate. Fe cation is bound at residue histidine 368.

It belongs to the homogentisate dioxygenase family. Hexamer; dimer of trimers. Fe cation is required as a cofactor.

It carries out the reaction homogentisate + O2 = 4-maleylacetoacetate + H(+). Its pathway is amino-acid degradation; L-phenylalanine degradation; acetoacetate and fumarate from L-phenylalanine: step 4/6. In terms of biological role, involved in the catabolism of homogentisate (2,5-dihydroxyphenylacetate or 2,5-OH-PhAc), a central intermediate in the degradation of phenylalanine and tyrosine. Catalyzes the oxidative ring cleavage of the aromatic ring of homogentisate to yield maleylacetoacetate. In Pseudomonas syringae pv. syringae (strain B728a), this protein is Homogentisate 1,2-dioxygenase.